A 348-amino-acid chain; its full sequence is Caricain (348 aa).

The signal sequence occupies residues 1-16 (MAMIPSISKLLFVAIC). Positions 17 to 132 (LFVHMSVSFG…EEFINEDTVN (116 aa)) are cleaved as a propeptide — activation peptide. Asn-86 carries an N-linked (GlcNAc...) asparagine glycan. 3 cysteine pairs are disulfide-bonded: Cys-154/Cys-195, Cys-188/Cys-227, and Cys-285/Cys-336. Cys-157 is an active-site residue. An E64-binding site is contributed by Cys-157. Residues His-291 and Asn-311 contribute to the active site.

It belongs to the peptidase C1 family. Monomer.

It carries out the reaction Hydrolysis of proteins with broad specificity for peptide bonds, similar to those of papain and chymopapain.. Its activity is regulated as follows. Repressed by the active-site-directed cysteine protease inhibitor E64 (L-trans-epoxysuccinyl-leucylamide-(4-guanido)-butane) produced by Aspergillus japonicus. In terms of biological role, cysteine proteinase with a high level of diversity in substrate specificity. The chain is Caricain from Carica papaya (Papaya).